Here is a 137-residue protein sequence, read N- to C-terminus: Endoribonuclease YbeY (137 aa).

Zn(2+) is bound by residues His-105, His-109, and Asp-115.

It belongs to the endoribonuclease YbeY family. It depends on Zn(2+) as a cofactor.

Its subcellular location is the cytoplasm. Single strand-specific metallo-endoribonuclease involved in late-stage 70S ribosome quality control and in maturation of the 3' terminus of the 16S rRNA. This is Endoribonuclease YbeY from Chlorobaculum tepidum (strain ATCC 49652 / DSM 12025 / NBRC 103806 / TLS) (Chlorobium tepidum).